The sequence spans 167 residues: Dihydrofolate reductase (167 aa).

Residues methionine 1–lysine 162 form the DHFR domain. Residues alanine 7 and leucine 13–leucine 19 contribute to the NADP(+) site. Residue aspartate 27 coordinates substrate. Residue lysine 45–threonine 46 participates in NADP(+) binding. Arginine 58 contributes to the substrate binding site. NADP(+)-binding positions include threonine 64–threonine 65 and glycine 99–alanine 106. Position 117 (threonine 117) interacts with substrate.

It belongs to the dihydrofolate reductase family.

The catalysed reaction is (6S)-5,6,7,8-tetrahydrofolate + NADP(+) = 7,8-dihydrofolate + NADPH + H(+). The protein operates within cofactor biosynthesis; tetrahydrofolate biosynthesis; 5,6,7,8-tetrahydrofolate from 7,8-dihydrofolate: step 1/1. Functionally, key enzyme in folate metabolism. Catalyzes an essential reaction for de novo glycine and purine synthesis, and for DNA precursor synthesis. The protein is Dihydrofolate reductase (folA) of Enterococcus faecium (Streptococcus faecium).